The chain runs to 31 residues: Cytochrome b6-f complex subunit 6 (31 aa).

The helical transmembrane segment at 3-23 (VAIDYFLLVGFCFAVTSGLWI) threads the bilayer.

This sequence belongs to the PetL family. The 4 large subunits of the cytochrome b6-f complex are cytochrome b6, subunit IV (17 kDa polypeptide, PetD), cytochrome f and the Rieske protein, while the 4 small subunits are PetG, PetL, PetM and PetN. The complex functions as a dimer.

Its subcellular location is the plastid. It localises to the chloroplast thylakoid membrane. In terms of biological role, component of the cytochrome b6-f complex, which mediates electron transfer between photosystem II (PSII) and photosystem I (PSI), cyclic electron flow around PSI, and state transitions. PetL is important for photoautotrophic growth as well as for electron transfer efficiency and stability of the cytochrome b6-f complex. The protein is Cytochrome b6-f complex subunit 6 of Phaeodactylum tricornutum (strain CCAP 1055/1).